The sequence spans 188 residues: Probable RNA-binding protein 18 (188 aa).

Residues 23 to 104 (HRLWIGNIDP…KKLVVRWAHA (82 aa)) form the RRM domain. The segment at 151-188 (EENPDDYSGPSAYTYNKPPDKREKRSQPYHKHFRKHRR) is disordered. Basic residues predominate over residues 177–188 (QPYHKHFRKHRR).

In Danio rerio (Zebrafish), this protein is Probable RNA-binding protein 18 (rbm18).